A 185-amino-acid chain; its full sequence is Imidazoleglycerol-phosphate dehydratase (185 aa).

The protein belongs to the imidazoleglycerol-phosphate dehydratase family.

It localises to the cytoplasm. It carries out the reaction D-erythro-1-(imidazol-4-yl)glycerol 3-phosphate = 3-(imidazol-4-yl)-2-oxopropyl phosphate + H2O. Its pathway is amino-acid biosynthesis; L-histidine biosynthesis; L-histidine from 5-phospho-alpha-D-ribose 1-diphosphate: step 6/9. In Pyrobaculum arsenaticum (strain DSM 13514 / JCM 11321 / PZ6), this protein is Imidazoleglycerol-phosphate dehydratase.